Here is a 583-residue protein sequence, read N- to C-terminus: Dynein axonemal assembly factor 3 (583 aa).

The tract at residues 455–534 is disordered; the sequence is RGGGDSAVES…RADQIPPLEA (80 aa).

The protein belongs to the DNAAF3 family.

It is found in the cytoplasm. The protein resides in the dynein axonemal particle. Required for the assembly of axonemal inner and outer dynein arms. Involved in preassembly of dyneins into complexes before their transport into cilia. The polypeptide is Dynein axonemal assembly factor 3 (Dnaaf3) (Rattus norvegicus (Rat)).